The chain runs to 361 residues: Chorismate synthase (361 aa).

NADP(+) is bound by residues Arg48 and Arg54. FMN is bound by residues 125-127 (RSS), 238-239 (NA), Gly278, 293-297 (KPTSS), and Arg319.

This sequence belongs to the chorismate synthase family. In terms of assembly, homotetramer. FMNH2 serves as cofactor.

It carries out the reaction 5-O-(1-carboxyvinyl)-3-phosphoshikimate = chorismate + phosphate. Its pathway is metabolic intermediate biosynthesis; chorismate biosynthesis; chorismate from D-erythrose 4-phosphate and phosphoenolpyruvate: step 7/7. In terms of biological role, catalyzes the anti-1,4-elimination of the C-3 phosphate and the C-6 proR hydrogen from 5-enolpyruvylshikimate-3-phosphate (EPSP) to yield chorismate, which is the branch point compound that serves as the starting substrate for the three terminal pathways of aromatic amino acid biosynthesis. This reaction introduces a second double bond into the aromatic ring system. The sequence is that of Chorismate synthase from Escherichia coli (strain K12 / MC4100 / BW2952).